We begin with the raw amino-acid sequence, 366 residues long: Spermine synthase (366 aa).

Position 2 is an N-acetylalanine (Ala2). Ser57 is subject to Phosphoserine. A PABS domain is found at 122 to 362 (RYWPTADGRL…ELWVFYTVWK (241 aa)). Gln148 contacts S-adenosyl 3-(methylsulfanyl)propylamine. Positions 177 and 201 each coordinate spermidine. S-adenosyl 3-(methylsulfanyl)propylamine-binding positions include Glu220 and 255–256 (DC). Asp276 serves as the catalytic Proton acceptor. Residues Tyr351 and Glu353 each coordinate spermidine.

It belongs to the spermidine/spermine synthase family. In terms of assembly, homodimer. Dimerization is mediated through the N-terminal domain and seems to be required for activity as deletion of the N-terminal domain causes complete loss of activity.

It carries out the reaction S-adenosyl 3-(methylsulfanyl)propylamine + spermidine = spermine + S-methyl-5'-thioadenosine + H(+). Its pathway is amine and polyamine biosynthesis; spermine biosynthesis; spermine from spermidine: step 1/1. Its function is as follows. Catalyzes the production of spermine from spermidine and decarboxylated S-adenosylmethionine (dcSAM). Required for normal viability, growth and fertility. In Mus musculus (Mouse), this protein is Spermine synthase (Sms).